A 477-amino-acid polypeptide reads, in one-letter code: Cysteine--tRNA ligase (477 aa).

A Zn(2+)-binding site is contributed by cysteine 28. The 'HIGH' region motif lies at 30-40 (PTVYDYAHIGN). The Zn(2+) site is built by cysteine 213, histidine 238, and glutamate 242. The 'KMSKS' region signature appears at 270–274 (KMSKS). Lysine 273 serves as a coordination point for ATP.

It belongs to the class-I aminoacyl-tRNA synthetase family. In terms of assembly, monomer. The cofactor is Zn(2+).

It localises to the cytoplasm. The catalysed reaction is tRNA(Cys) + L-cysteine + ATP = L-cysteinyl-tRNA(Cys) + AMP + diphosphate. This chain is Cysteine--tRNA ligase, found in Chlamydia trachomatis serovar A (strain ATCC VR-571B / DSM 19440 / HAR-13).